The sequence spans 853 residues: Leucine--tRNA ligase (853 aa).

The 'HIGH' region signature appears at 42 to 52 (PYPSGNLHMGH). The short motif at 615–619 (KMSKS) is the 'KMSKS' region element. K618 provides a ligand contact to ATP.

This sequence belongs to the class-I aminoacyl-tRNA synthetase family.

It localises to the cytoplasm. It carries out the reaction tRNA(Leu) + L-leucine + ATP = L-leucyl-tRNA(Leu) + AMP + diphosphate. The sequence is that of Leucine--tRNA ligase from Crocosphaera subtropica (strain ATCC 51142 / BH68) (Cyanothece sp. (strain ATCC 51142)).